A 524-amino-acid polypeptide reads, in one-letter code: G1/S-specific cyclin-E (524 aa).

The segment at 1 to 155 (MAGRKSSRTA…EESHEMVRLE (155 aa)) is disordered. The span at 18–47 (KPERKSAILSPHDELRERLLETAIDMKENI) shows a compositional bias: basic and acidic residues. Over residues 48-62 (PQRNTRNSSVGSQKS) the composition is skewed to polar residues. Composition is skewed to basic and acidic residues over residues 63-78 (DCSE…EGPA), 86-95 (KHRNGSREDS), and 146-155 (EESHEMVRLE).

The protein belongs to the cyclin family. Cyclin E subfamily. In terms of assembly, interacts with a member of the CDK2/CDK protein kinases to form a serine/threonine kinase holoenzyme complex. The cyclin subunit imparts substrate specificity to the complex. As to expression, expressed dynamically in proliferating cells throughout development. Detectable in larval blast cells undergoing active proliferation that give rise to all tissue types, including germline, intestine, hypodermis, neurons, and muscle.

The protein localises to the nucleus. It localises to the cytoplasm. It is found in the cytoskeleton. The protein resides in the microtubule organizing center. Its subcellular location is the centrosome. The protein localises to the centriole. Functionally, essential for the control of the cell cycle at the G1/S (start) transition. In association with cdk-2, regulates proliferation, quiescent state and cell fate during the development of several cell lineages. In the embryo, initiates the establishment of cell polarity through the recruitment of the centrosomal proteins spd-2 and spd-5 during prophase. During the development of the vulva, controls the onset of vulval cell terminal differentiation by controlling the duration of G1 phase. During hypoderm development at early larval stages, controls syncytial fate of seam cell daughter cells. Involved in the progression of cell division in the intestinal lineage in larvae, and in particular in endoreplication, a specific growth pathway in the intestinal epithelium, required for feeding and gut development in growing larvae. By controlling the activity of translational repressor gld-1, regulates the pool of germline stem cells and the size of the mitotic zone by preventing entry into meiosis. In addition, repression of expression by gld-1 prevents mitosis re-entry in meiotic germline cells. This Caenorhabditis elegans protein is G1/S-specific cyclin-E.